A 479-amino-acid chain; its full sequence is Aspartyl/glutamyl-tRNA(Asn/Gln) amidotransferase subunit B (479 aa).

The protein belongs to the GatB/GatE family. GatB subfamily. Heterotrimer of A, B and C subunits.

The enzyme catalyses L-glutamyl-tRNA(Gln) + L-glutamine + ATP + H2O = L-glutaminyl-tRNA(Gln) + L-glutamate + ADP + phosphate + H(+). The catalysed reaction is L-aspartyl-tRNA(Asn) + L-glutamine + ATP + H2O = L-asparaginyl-tRNA(Asn) + L-glutamate + ADP + phosphate + 2 H(+). Functionally, allows the formation of correctly charged Asn-tRNA(Asn) or Gln-tRNA(Gln) through the transamidation of misacylated Asp-tRNA(Asn) or Glu-tRNA(Gln) in organisms which lack either or both of asparaginyl-tRNA or glutaminyl-tRNA synthetases. The reaction takes place in the presence of glutamine and ATP through an activated phospho-Asp-tRNA(Asn) or phospho-Glu-tRNA(Gln). In Geobacter sulfurreducens (strain ATCC 51573 / DSM 12127 / PCA), this protein is Aspartyl/glutamyl-tRNA(Asn/Gln) amidotransferase subunit B.